The sequence spans 443 residues: ATP-dependent protease ATPase subunit HslU (443 aa).

Residues Ile-18, Gly-60–Glu-65, Asp-256, Glu-321, and Arg-393 contribute to the ATP site.

This sequence belongs to the ClpX chaperone family. HslU subfamily. A double ring-shaped homohexamer of HslV is capped on each side by a ring-shaped HslU homohexamer. The assembly of the HslU/HslV complex is dependent on binding of ATP.

It is found in the cytoplasm. Functionally, ATPase subunit of a proteasome-like degradation complex; this subunit has chaperone activity. The binding of ATP and its subsequent hydrolysis by HslU are essential for unfolding of protein substrates subsequently hydrolyzed by HslV. HslU recognizes the N-terminal part of its protein substrates and unfolds these before they are guided to HslV for hydrolysis. This chain is ATP-dependent protease ATPase subunit HslU, found in Buchnera aphidicola subsp. Acyrthosiphon pisum (strain APS) (Acyrthosiphon pisum symbiotic bacterium).